A 148-amino-acid chain; its full sequence is UPF0208 membrane protein HD_1715 (148 aa).

The next 2 membrane-spanning stretches (helical) occupy residues 41–60 (AARFMPIFACFAILWQYFFT) and 66–88 (ILANAIITSLFAISLPYQGLYWL).

The protein belongs to the UPF0208 family.

The protein localises to the cell inner membrane. The protein is UPF0208 membrane protein HD_1715 of Haemophilus ducreyi (strain 35000HP / ATCC 700724).